A 410-amino-acid chain; its full sequence is 45 kDa immediate-early protein 2 (410 aa).

The tract at residues 36–166 (SEEEQGEEVE…SKRISELDNE (131 aa)) is disordered. Low complexity-rich tracts occupy residues 47–67 (RGATASSPSTGSGTPRVTSPT), 90–101 (SSSSSSCSSASD), and 132–147 (AASSSLLSCGHQSSGG). Residues 257 to 283 (VRCRLGTMCNLALSTPFLMEHTMPVTH) fold into a zinc finger.

Functionally, activates the E1.7 promoter. This activation is augmented by the IE1 protein. It down-regulates the transcription of genes under the control of the major IE promoter. The chain is 45 kDa immediate-early protein 2 (UL122) from Homo sapiens (Human).